Here is a 458-residue protein sequence, read N- to C-terminus: ATP synthase subunit beta (458 aa).

ATP is bound at residue 148–155 (GGAGVGKT).

It belongs to the ATPase alpha/beta chains family. As to quaternary structure, F-type ATPases have 2 components, CF(1) - the catalytic core - and CF(0) - the membrane proton channel. CF(1) has five subunits: alpha(3), beta(3), gamma(1), delta(1), epsilon(1). CF(0) has three main subunits: a(1), b(2) and c(9-12). The alpha and beta chains form an alternating ring which encloses part of the gamma chain. CF(1) is attached to CF(0) by a central stalk formed by the gamma and epsilon chains, while a peripheral stalk is formed by the delta and b chains.

It is found in the cell inner membrane. The catalysed reaction is ATP + H2O + 4 H(+)(in) = ADP + phosphate + 5 H(+)(out). Produces ATP from ADP in the presence of a proton gradient across the membrane. The catalytic sites are hosted primarily by the beta subunits. The protein is ATP synthase subunit beta of Shewanella pealeana (strain ATCC 700345 / ANG-SQ1).